Reading from the N-terminus, the 240-residue chain is MKGLVSTGWKGPVKFRMPTAENLVPIRLDIQFEGQRYKDAFTWNPSDPDNEVVIFAKRTVKDLKLPYAFVTQIAQSIQSQLSDFRAYEGQDMYTGEKIIPIKLDLRVNHTLIKDQFLWDLNNFESDPEEFARTLCKDLGVEDPEVGPAVAFAIREQLYEIAIQSVASARESRLSKKGRRGSDHGSASKASGLSMDLMKLFSFKSSVVRKRKDLDVYEPVVDLLTSEEVDALEAREERHAR.

The protein belongs to the SNF5 family. Interacts with SWI3A and SWI3B, but not with BRM. Expressed in roots, stems, leaves, flowers and siliques.

The protein resides in the nucleus. Its function is as follows. Component of a multiprotein complex equivalent of the yeast SWI/SNF complex, an ATP-dependent chromatin-remodeling complex, which is required for the positive and negative regulation of gene expression of a large number of genes. It changes chromatin structure by altering DNA-histone contacts within a nucleosome, leading eventually to a change in nucleosome position, thus facilitating or repressing binding of gene-specific transcription factors. The protein is Chromatin structure-remodeling complex protein BSH (BSH) of Arabidopsis thaliana (Mouse-ear cress).